Reading from the N-terminus, the 117-residue chain is Large ribosomal subunit protein bL20 (117 aa).

The protein belongs to the bacterial ribosomal protein bL20 family.

Functionally, binds directly to 23S ribosomal RNA and is necessary for the in vitro assembly process of the 50S ribosomal subunit. It is not involved in the protein synthesizing functions of that subunit. This chain is Large ribosomal subunit protein bL20, found in Geotalea uraniireducens (strain Rf4) (Geobacter uraniireducens).